The primary structure comprises 690 residues: Eukaryotic translation initiation factor 3 subunit B (690 aa).

Basic and acidic residues predominate over residues M1–G11. The interval M1–S36 is disordered. Residues N15–F25 are compositionally biased toward acidic residues. Positions S57–D141 constitute an RRM domain. 5 WD repeats span residues T207 to K246, G292 to L331, I334 to E369, E442 to L484, and P530 to T575. Residues Q614–R645 are a coiled coil.

The protein belongs to the eIF-3 subunit B family. Component of the eukaryotic translation initiation factor 3 (eIF-3) complex. The eIF-3 complex interacts with pix. Interacts with mxt.

The protein resides in the cytoplasm. RNA-binding component of the eukaryotic translation initiation factor 3 (eIF-3) complex, which is involved in protein synthesis of a specialized repertoire of mRNAs and, together with other initiation factors, stimulates binding of mRNA and methionyl-tRNAi to the 40S ribosome. The eIF-3 complex specifically targets and initiates translation of a subset of mRNAs involved in cell proliferation. The chain is Eukaryotic translation initiation factor 3 subunit B from Drosophila virilis (Fruit fly).